The primary structure comprises 250 residues: MSTTMREMLEAGVHFGHQTRFWNPKMAPFIFGHRNKIHIINLEKSLPMFQDAMKYAKQLTANRGTILMVGTKRQAREIVAAEARRAGVPFVDTRWLGGMLTNFKTVKTSIKRLKDMKAQQEAGLDSLSKKEQLTFTREIEKLEKDIGGIQDMTALPDAIFVIDVGFHKIAVAEAKKLGIPLIGVVDSNHSPEGIDYVIPGNDDSSKAVTLYARGIADAIIEGRNSATGDVVKAIAEGSDEFVEVEEGASA.

It belongs to the universal ribosomal protein uS2 family.

The polypeptide is Small ribosomal subunit protein uS2 (Variovorax paradoxus (strain S110)).